We begin with the raw amino-acid sequence, 253 residues long: MADAPYKLILLRHGESEWNAKNLFTGWVDVNLTEKGEKEAVRGGELLKDAGLLPDVLHTSLQRRAIRTAQLALESADRLWIPVRRSWRLNERHYGALQGKDKAQTLAEFGEEQFMLWRRSYDTPPPPLARDDEFSQFDDPRYATLPPEVRPDTECLKDVVVRMLPYWFDSIVPDLLTGRTVLVAAHGNSLRGLVKHLDGISDEDISGLNIPTGIPLSYELDADFKPLKPGGTYLDPDAAKAAIEAVKNQGKKK.

Residues 12–19 (RHGESEWN), 25–26 (TG), arginine 64, 91–94 (ERHY), lysine 102, 118–119 (RR), and 187–188 (GN) contribute to the substrate site. Histidine 13 acts as the Tele-phosphohistidine intermediate in catalysis. Residue glutamate 91 is the Proton donor/acceptor of the active site.

It belongs to the phosphoglycerate mutase family. BPG-dependent PGAM subfamily.

It carries out the reaction (2R)-2-phosphoglycerate = (2R)-3-phosphoglycerate. The protein operates within carbohydrate degradation; glycolysis; pyruvate from D-glyceraldehyde 3-phosphate: step 3/5. In terms of biological role, catalyzes the interconversion of 2-phosphoglycerate and 3-phosphoglycerate. The protein is 2,3-bisphosphoglycerate-dependent phosphoglycerate mutase of Streptomyces griseus subsp. griseus (strain JCM 4626 / CBS 651.72 / NBRC 13350 / KCC S-0626 / ISP 5235).